Consider the following 183-residue polypeptide: Peptide deformylase (183 aa).

Fe cation contacts are provided by Cys-110 and His-153. Glu-154 is an active-site residue. His-157 contributes to the Fe cation binding site.

Belongs to the polypeptide deformylase family. The cofactor is Fe(2+).

It carries out the reaction N-terminal N-formyl-L-methionyl-[peptide] + H2O = N-terminal L-methionyl-[peptide] + formate. Removes the formyl group from the N-terminal Met of newly synthesized proteins. Requires at least a dipeptide for an efficient rate of reaction. N-terminal L-methionine is a prerequisite for activity but the enzyme has broad specificity at other positions. The protein is Peptide deformylase of Listeria monocytogenes serovar 1/2a (strain ATCC BAA-679 / EGD-e).